Reading from the N-terminus, the 599-residue chain is Kelch repeat and BTB domain-containing protein 8 (599 aa).

The tract at residues 1-25 (MAASADLSKSSPTPNGIPSSDTAND) is disordered. Over residues 7-25 (LSKSSPTPNGIPSSDTAND) the composition is skewed to polar residues. A BTB domain is found at 49 to 117 (TDIVVEVDHG…AYTSRVILTE (69 aa)). One can recognise a BACK domain in the interval 152–254 (SIGVFIFADH…MEDTFIEKIP (103 aa)). 5 Kelch repeats span residues 334-388 (DIYI…YCCG), 389-439 (KMYA…EHKE), 441-479 (IYVLQGEFFLFYEPQKDYWGFLTPMTVPRIQGLAAVYKD), 481-530 (IYYI…LFQN), and 540-586 (QVTV…FECA).

It belongs to the KBTBD8 family. Component of the BCR(KBTBD8) E3 ubiquitin ligase complex, at least composed of CUL3, KBTBD8 and RBX1.

Its subcellular location is the cytoplasm. It localises to the cytoskeleton. The protein resides in the spindle. It is found in the golgi apparatus. Functionally, substrate-specific adapter of a BCR (BTB-CUL3-RBX1) E3 ubiquitin ligase complex that acts as a regulator of neural crest specification. The BCR(KBTBD8) complex acts by mediating monoubiquitination of NOLC1 and TCOF1: monoubiquitination promotes the formation of a NOLC1-TCOF1 complex that acts as a platform to connect RNA polymerase I with enzymes responsible for ribosomal processing and modification, leading to remodel the translational program of differentiating cells in favor of neural crest specification. This chain is Kelch repeat and BTB domain-containing protein 8 (Kbtbd8), found in Mus musculus (Mouse).